The chain runs to 263 residues: Hydroxyethylthiazole kinase (263 aa).

Met39 contacts substrate. Residues Lys115 and Thr160 each contribute to the ATP site. Residue Gly187 coordinates substrate.

The protein belongs to the Thz kinase family. It depends on Mg(2+) as a cofactor.

The catalysed reaction is 5-(2-hydroxyethyl)-4-methylthiazole + ATP = 4-methyl-5-(2-phosphooxyethyl)-thiazole + ADP + H(+). It functions in the pathway cofactor biosynthesis; thiamine diphosphate biosynthesis; 4-methyl-5-(2-phosphoethyl)-thiazole from 5-(2-hydroxyethyl)-4-methylthiazole: step 1/1. In terms of biological role, catalyzes the phosphorylation of the hydroxyl group of 4-methyl-5-beta-hydroxyethylthiazole (THZ). The polypeptide is Hydroxyethylthiazole kinase (Staphylococcus saprophyticus subsp. saprophyticus (strain ATCC 15305 / DSM 20229 / NCIMB 8711 / NCTC 7292 / S-41)).